Consider the following 241-residue polypeptide: Glutathione S-transferase omega-1 (241 aa).

The residue at position 2 (Ser-2) is an N-acetylserine. The 80-residue stretch at 22 to 101 folds into the GST N-terminal domain; the sequence is GLIRVYSMRF…YLDEAYPGKK (80 aa). The Nucleophile role is filled by Cys-32. An N6-acetyllysine modification is found at Lys-57. Glutathione contacts are provided by residues Lys-59, Val-72, and 85-86; that span reads ES. The region spanning 106 to 225 is the GST C-terminal domain; the sequence is DPYEKACQKM…HIEPRDLRAF (120 aa). N6-acetyllysine is present on residues Lys-143, Lys-148, and Lys-152.

Homodimer. In terms of tissue distribution, most abundant in the liver and skeletal muscle; also expressed in heart, diaphragm, colon, thymus, kidney, lung, ovaries, spleen, intestine and pancreas.

Its subcellular location is the cytoplasm. It is found in the cytosol. The enzyme catalyses RX + glutathione = an S-substituted glutathione + a halide anion + H(+). It catalyses the reaction L-dehydroascorbate + 2 glutathione = glutathione disulfide + L-ascorbate. The catalysed reaction is methylarsonate + 2 glutathione + H(+) = methylarsonous acid + glutathione disulfide + H2O. In terms of biological role, exhibits glutathione-dependent thiol transferase and dehydroascorbate reductase activities. Has S-(phenacyl)glutathione reductase activity. Also has glutathione S-transferase activity. Participates in the biotransformation of inorganic arsenic and reduces monomethylarsonic acid (MMA) and dimethylarsonic acid. The polypeptide is Glutathione S-transferase omega-1 (GSTO1) (Sus scrofa (Pig)).